We begin with the raw amino-acid sequence, 952 residues long: Isoleucine--tRNA ligase (952 aa).

A 'HIGH' region motif is present at residues 58–68 (PYANGDIHIGH). L-isoleucyl-5'-AMP is bound at residue Glu576. Positions 617–621 (KMSKS) match the 'KMSKS' region motif. Lys620 is an ATP binding site. The Zn(2+) site is built by Cys915, Cys918, Cys935, and Cys938.

Belongs to the class-I aminoacyl-tRNA synthetase family. IleS type 1 subfamily. In terms of assembly, monomer. Zn(2+) is required as a cofactor.

The protein resides in the cytoplasm. The enzyme catalyses tRNA(Ile) + L-isoleucine + ATP = L-isoleucyl-tRNA(Ile) + AMP + diphosphate. Catalyzes the attachment of isoleucine to tRNA(Ile). As IleRS can inadvertently accommodate and process structurally similar amino acids such as valine, to avoid such errors it has two additional distinct tRNA(Ile)-dependent editing activities. One activity is designated as 'pretransfer' editing and involves the hydrolysis of activated Val-AMP. The other activity is designated 'posttransfer' editing and involves deacylation of mischarged Val-tRNA(Ile). This Aliivibrio fischeri (strain MJ11) (Vibrio fischeri) protein is Isoleucine--tRNA ligase.